The primary structure comprises 874 residues: Alanine--tRNA ligase (874 aa).

Residues His-564, His-568, Cys-665, and His-669 each contribute to the Zn(2+) site.

This sequence belongs to the class-II aminoacyl-tRNA synthetase family. The cofactor is Zn(2+).

The protein resides in the cytoplasm. It carries out the reaction tRNA(Ala) + L-alanine + ATP = L-alanyl-tRNA(Ala) + AMP + diphosphate. Catalyzes the attachment of alanine to tRNA(Ala) in a two-step reaction: alanine is first activated by ATP to form Ala-AMP and then transferred to the acceptor end of tRNA(Ala). Also edits incorrectly charged Ser-tRNA(Ala) and Gly-tRNA(Ala) via its editing domain. This Cupriavidus metallidurans (strain ATCC 43123 / DSM 2839 / NBRC 102507 / CH34) (Ralstonia metallidurans) protein is Alanine--tRNA ligase.